A 699-amino-acid chain; its full sequence is Protein phosphatase 1 regulatory subunit 37 (699 aa).

Positions 1–12 (MEIPPQEAPPGP) are enriched in pro residues. The disordered stretch occupies residues 1–42 (MEIPPQEAPPGPGADGEAEEAPVEAPSPGPASPPADGRLKAA). Ser-50 and Ser-56 each carry phosphoserine. 5 LRR repeats span residues 220–240 (SLAV…MLLA), 248–269 (TLRE…AQLG), 277–297 (SLQI…AYIC), 306–326 (GLAT…AFLG), and 334–354 (SLET…RNLK). Residues 467 to 667 (RLQLSASMPE…PPGPEAKVGS (201 aa)) are disordered. Acidic residues predominate over residues 510–525 (SDSDSDSEGEDRDEAD). Ser-566 is subject to Phosphoserine. 2 stretches are compositionally biased toward pro residues: residues 588-613 (PPVP…PFPT) and 622-642 (DPGP…PPLP).

Belongs to the PPP1R37 family. As to quaternary structure, interacts with PPP1CA.

In terms of biological role, inhibits phosphatase activity of protein phosphatase 1 (PP1) complexes. The polypeptide is Protein phosphatase 1 regulatory subunit 37 (PPP1R37) (Bos taurus (Bovine)).